Here is an 829-residue protein sequence, read N- to C-terminus: Leucine--tRNA ligase (829 aa).

The short motif at 34–44 (PYPSGNIHMGH) is the 'HIGH' region element. Residues 591–595 (KMSKS) carry the 'KMSKS' region motif. Residue lysine 594 participates in ATP binding.

This sequence belongs to the class-I aminoacyl-tRNA synthetase family.

Its subcellular location is the cytoplasm. The enzyme catalyses tRNA(Leu) + L-leucine + ATP = L-leucyl-tRNA(Leu) + AMP + diphosphate. This Ehrlichia canis (strain Jake) protein is Leucine--tRNA ligase.